Consider the following 346-residue polypeptide: Small ribosomal subunit biogenesis GTPase RsgA (346 aa).

The 164-residue stretch at 98–261 folds into the CP-type G domain; sequence VQGGRGPQLA…VIDTPGMRTL (164 aa). GTP contacts are provided by residues 148–151 and 200–208; these read TKAD and GSSGVGKST. The Zn(2+) site is built by C284, C289, H291, and C297. Positions 317-346 are disordered; that stretch reads RKLSDENQHNTPVQSGPRGAKSPAGRGKRR.

Belongs to the TRAFAC class YlqF/YawG GTPase family. RsgA subfamily. In terms of assembly, monomer. Associates with 30S ribosomal subunit, binds 16S rRNA. Zn(2+) is required as a cofactor.

The protein localises to the cytoplasm. Its function is as follows. One of several proteins that assist in the late maturation steps of the functional core of the 30S ribosomal subunit. Helps release RbfA from mature subunits. May play a role in the assembly of ribosomal proteins into the subunit. Circularly permuted GTPase that catalyzes slow GTP hydrolysis, GTPase activity is stimulated by the 30S ribosomal subunit. The polypeptide is Small ribosomal subunit biogenesis GTPase RsgA (Mesorhizobium japonicum (strain LMG 29417 / CECT 9101 / MAFF 303099) (Mesorhizobium loti (strain MAFF 303099))).